Here is a 151-residue protein sequence, read N- to C-terminus: Prefoldin subunit alpha (151 aa).

It belongs to the prefoldin subunit alpha family. Heterohexamer of two alpha and four beta subunits.

It is found in the cytoplasm. Molecular chaperone capable of stabilizing a range of proteins. Seems to fulfill an ATP-independent, HSP70-like function in archaeal de novo protein folding. The protein is Prefoldin subunit alpha (pfdA) of Aeropyrum pernix (strain ATCC 700893 / DSM 11879 / JCM 9820 / NBRC 100138 / K1).